We begin with the raw amino-acid sequence, 321 residues long: Transaldolase (321 aa).

The active-site Schiff-base intermediate with substrate is lysine 132.

This sequence belongs to the transaldolase family. Type 1 subfamily. Homodimer.

Its subcellular location is the cytoplasm. The enzyme catalyses D-sedoheptulose 7-phosphate + D-glyceraldehyde 3-phosphate = D-erythrose 4-phosphate + beta-D-fructose 6-phosphate. It participates in carbohydrate degradation; pentose phosphate pathway; D-glyceraldehyde 3-phosphate and beta-D-fructose 6-phosphate from D-ribose 5-phosphate and D-xylulose 5-phosphate (non-oxidative stage): step 2/3. Transaldolase is important for the balance of metabolites in the pentose-phosphate pathway. The chain is Transaldolase from Rhizobium etli (strain ATCC 51251 / DSM 11541 / JCM 21823 / NBRC 15573 / CFN 42).